The following is a 451-amino-acid chain: Cyclin-dependent kinase 18 (451 aa).

Residues 39–61 (RNEDGRDEPGQLSPGVQYQQRQN) are disordered. Ser-51 carries the phosphoserine modification. Residues 52–61 (PGVQYQQRQN) are compositionally biased toward polar residues. Phosphoserine occurs at positions 66 and 109. The 282-residue stretch at 121–402 (YVKLDKLGEG…AEAALSHPYF (282 aa)) folds into the Protein kinase domain. ATP-binding positions include 127-135 (LGEGTYATV) and Lys-150. The Proton acceptor role is filled by Asp-242. Phosphoserine occurs at positions 417 and 420.

This sequence belongs to the protein kinase superfamily. CMGC Ser/Thr protein kinase family. CDC2/CDKX subfamily. As to expression, in brain, kidney, intestine and at a much lower level, in fetal tissues.

The enzyme catalyses L-seryl-[protein] + ATP = O-phospho-L-seryl-[protein] + ADP + H(+). It catalyses the reaction L-threonyl-[protein] + ATP = O-phospho-L-threonyl-[protein] + ADP + H(+). Its function is as follows. May play a role in signal transduction cascades in terminally differentiated cells. This Rattus norvegicus (Rat) protein is Cyclin-dependent kinase 18 (Cdk18).